Here is a 1287-residue protein sequence, read N- to C-terminus: DNA-directed RNA polymerase 147 kDa polypeptide (1287 aa).

The protein belongs to the poxviridae DNA-directed RNA polymerase 147 kDa subunit family. In terms of assembly, the DNA-dependent RNA polymerase used for intermediate and late genes expression consists of eight subunits Rpo30/OPG66, Rpo7/OPG90, Rpo22/OPG103, Rpo147/OPG105, Rpo18/OPG119, Rpo19/OPG131, Rpo132/OPG151 and Rpo35/OPG156. The same holoenzyme, with the addition of the transcription-specificity factor OPG109, is used for early gene expression.

The protein resides in the virion. It catalyses the reaction RNA(n) + a ribonucleoside 5'-triphosphate = RNA(n+1) + diphosphate. In terms of biological role, part of the DNA-dependent RNA polymerase which catalyzes the transcription of viral DNA into RNA using the four ribonucleoside triphosphates as substrates. Responsible for the transcription of early, intermediate and late genes. DNA-dependent RNA polymerase associates with the early transcription factor (ETF), itself composed of OPG118 and OPG133, thereby allowing the early genes transcription. Late transcription, and probably also intermediate transcription, require newly synthesized RNA polymerase. The polypeptide is DNA-directed RNA polymerase 147 kDa polypeptide (OPG105) (Fowlpox virus (strain NVSL) (FPV)).